A 691-amino-acid polypeptide reads, in one-letter code: Two-component response regulator ORR21 (691 aa).

The Response regulatory domain occupies 17–132 (KVLVVDDDPT…ELKNIWQHVI (116 aa)). Aspartate 68 carries the 4-aspartylphosphate modification. Positions 139–155 (NKEHEHSGSLDDTDRTR) are enriched in basic and acidic residues. The interval 139 to 204 (NKEHEHSGSL…DPSSTSKKPR (66 aa)) is disordered. Positions 199–258 (TSKKPRVVWSVELHQQFVNAVNHLGIDKAVPKKILELMNVPGLTRENVASHLQKFRLYLK) form a DNA-binding region, myb-like GARP.

This sequence belongs to the ARR family. Type-B subfamily. In terms of processing, two-component system major event consists of a His-to-Asp phosphorelay between a sensor histidine kinase (HK) and a response regulator (RR). In plants, the His-to-Asp phosphorelay involves an additional intermediate named Histidine-containing phosphotransfer protein (HPt). This multistep phosphorelay consists of a His-Asp-His-Asp sequential transfer of a phosphate group between first a His and an Asp of the HK protein, followed by the transfer to a conserved His of the HPt protein and finally the transfer to an Asp in the receiver domain of the RR protein.

It localises to the nucleus. In terms of biological role, transcriptional activator that binds specific DNA sequence. Functions as a response regulator involved in His-to-Asp phosphorelay signal transduction system. Phosphorylation of the Asp residue in the receiver domain activates the ability of the protein to promote the transcription of target genes. May directly activate some type-A response regulators in response to cytokinins. The protein is Two-component response regulator ORR21 of Oryza sativa subsp. japonica (Rice).